The primary structure comprises 157 residues: 2-C-methyl-D-erythritol 2,4-cyclodiphosphate synthase (157 aa).

A divalent metal cation is bound by residues Asp-8 and His-10. Residues 8-10 and 34-35 contribute to the 4-CDP-2-C-methyl-D-erythritol 2-phosphate site; these read DVH and HS. His-42 contributes to the a divalent metal cation binding site. Residues 56–58, 61–65, 100–106, 132–135, Phe-139, and Arg-142 contribute to the 4-CDP-2-C-methyl-D-erythritol 2-phosphate site; these read DIG, FPDTD, AQAPKMA, and TTTE.

The protein belongs to the IspF family. As to quaternary structure, homotrimer. The cofactor is a divalent metal cation.

The catalysed reaction is 4-CDP-2-C-methyl-D-erythritol 2-phosphate = 2-C-methyl-D-erythritol 2,4-cyclic diphosphate + CMP. It functions in the pathway isoprenoid biosynthesis; isopentenyl diphosphate biosynthesis via DXP pathway; isopentenyl diphosphate from 1-deoxy-D-xylulose 5-phosphate: step 4/6. Functionally, involved in the biosynthesis of isopentenyl diphosphate (IPP) and dimethylallyl diphosphate (DMAPP), two major building blocks of isoprenoid compounds. Catalyzes the conversion of 4-diphosphocytidyl-2-C-methyl-D-erythritol 2-phosphate (CDP-ME2P) to 2-C-methyl-D-erythritol 2,4-cyclodiphosphate (ME-CPP) with a corresponding release of cytidine 5-monophosphate (CMP). This Pseudomonas aeruginosa (strain UCBPP-PA14) protein is 2-C-methyl-D-erythritol 2,4-cyclodiphosphate synthase.